The primary structure comprises 179 residues: Large ribosomal subunit protein uL5 (179 aa).

The protein belongs to the universal ribosomal protein uL5 family. As to quaternary structure, part of the 50S ribosomal subunit; part of the 5S rRNA/L5/L18/L25 subcomplex. Contacts the 5S rRNA and the P site tRNA. Forms a bridge to the 30S subunit in the 70S ribosome.

Its function is as follows. This is one of the proteins that bind and probably mediate the attachment of the 5S RNA into the large ribosomal subunit, where it forms part of the central protuberance. In the 70S ribosome it contacts protein S13 of the 30S subunit (bridge B1b), connecting the 2 subunits; this bridge is implicated in subunit movement. Contacts the P site tRNA; the 5S rRNA and some of its associated proteins might help stabilize positioning of ribosome-bound tRNAs. The protein is Large ribosomal subunit protein uL5 of Vibrio cholerae serotype O1 (strain ATCC 39541 / Classical Ogawa 395 / O395).